Here is a 287-residue protein sequence, read N- to C-terminus: Pantothenate synthetase (287 aa).

30-37 lines the ATP pocket; the sequence is MGNLHSGH. His37 (proton donor) is an active-site residue. Gln61 provides a ligand contact to (R)-pantoate. Position 61 (Gln61) interacts with beta-alanine. Residue 149-152 coordinates ATP; it reads GEKD. Gln155 is a (R)-pantoate binding site. ATP contacts are provided by residues Val178 and 186–189; that span reads LSSR.

This sequence belongs to the pantothenate synthetase family. As to quaternary structure, homodimer.

It is found in the cytoplasm. The enzyme catalyses (R)-pantoate + beta-alanine + ATP = (R)-pantothenate + AMP + diphosphate + H(+). The protein operates within cofactor biosynthesis; (R)-pantothenate biosynthesis; (R)-pantothenate from (R)-pantoate and beta-alanine: step 1/1. Its function is as follows. Catalyzes the condensation of pantoate with beta-alanine in an ATP-dependent reaction via a pantoyl-adenylate intermediate. The chain is Pantothenate synthetase from Pseudomonas putida (strain GB-1).